The sequence spans 358 residues: Peptide chain release factor 1 (358 aa).

Glutamine 233 bears the N5-methylglutamine mark.

Belongs to the prokaryotic/mitochondrial release factor family. In terms of processing, methylated by PrmC. Methylation increases the termination efficiency of RF1.

It localises to the cytoplasm. In terms of biological role, peptide chain release factor 1 directs the termination of translation in response to the peptide chain termination codons UAG and UAA. This is Peptide chain release factor 1 from Lachnoclostridium phytofermentans (strain ATCC 700394 / DSM 18823 / ISDg) (Clostridium phytofermentans).